The following is a 275-amino-acid chain: Phosphate import ATP-binding protein PstB (275 aa).

One can recognise an ABC transporter domain in the interval 28 to 270 (IDCRDIRVFY…PREKRTEDYI (243 aa)). 60–67 (GPSGCGKS) contributes to the ATP binding site.

Belongs to the ABC transporter superfamily. Phosphate importer (TC 3.A.1.7) family. The complex is composed of two ATP-binding proteins (PstB), two transmembrane proteins (PstC and PstA) and a solute-binding protein (PstS).

It localises to the cell inner membrane. It carries out the reaction phosphate(out) + ATP + H2O = ADP + 2 phosphate(in) + H(+). In terms of biological role, part of the ABC transporter complex PstSACB involved in phosphate import. Responsible for energy coupling to the transport system. This chain is Phosphate import ATP-binding protein PstB, found in Hyphomonas neptunium (strain ATCC 15444).